Reading from the N-terminus, the 295-residue chain is 3-methyl-2-oxobutanoate hydroxymethyltransferase (295 aa).

2 residues coordinate Mg(2+): Asp53 and Asp92. 3-methyl-2-oxobutanoate contacts are provided by residues 53 to 54 (DS), Asp92, and Lys122. Mg(2+) is bound at residue Glu124. Residue Glu191 is the Proton acceptor of the active site.

Belongs to the PanB family. In terms of assembly, homodecamer; pentamer of dimers. Mg(2+) is required as a cofactor.

The protein resides in the cytoplasm. The catalysed reaction is 3-methyl-2-oxobutanoate + (6R)-5,10-methylene-5,6,7,8-tetrahydrofolate + H2O = 2-dehydropantoate + (6S)-5,6,7,8-tetrahydrofolate. Its pathway is cofactor biosynthesis; (R)-pantothenate biosynthesis; (R)-pantoate from 3-methyl-2-oxobutanoate: step 1/2. Catalyzes the reversible reaction in which hydroxymethyl group from 5,10-methylenetetrahydrofolate is transferred onto alpha-ketoisovalerate to form ketopantoate. This chain is 3-methyl-2-oxobutanoate hydroxymethyltransferase, found in Koribacter versatilis (strain Ellin345).